Consider the following 210-residue polypeptide: Orotate phosphoribosyltransferase (210 aa).

Residues R96, K100, H102, and 122 to 130 (DDLISTGGS) each bind 5-phospho-alpha-D-ribose 1-diphosphate. S126 provides a ligand contact to orotate.

Belongs to the purine/pyrimidine phosphoribosyltransferase family. PyrE subfamily. In terms of assembly, homodimer. Mg(2+) serves as cofactor.

The catalysed reaction is orotidine 5'-phosphate + diphosphate = orotate + 5-phospho-alpha-D-ribose 1-diphosphate. It participates in pyrimidine metabolism; UMP biosynthesis via de novo pathway; UMP from orotate: step 1/2. In terms of biological role, catalyzes the transfer of a ribosyl phosphate group from 5-phosphoribose 1-diphosphate to orotate, leading to the formation of orotidine monophosphate (OMP). The chain is Orotate phosphoribosyltransferase from Levilactobacillus brevis (strain ATCC 367 / BCRC 12310 / CIP 105137 / JCM 1170 / LMG 11437 / NCIMB 947 / NCTC 947) (Lactobacillus brevis).